Consider the following 124-residue polypeptide: Glycine cleavage system H protein (124 aa).

Residues 22-104 (KAKVGITDFA…YENGYLFIIE (83 aa)) form the Lipoyl-binding domain. Lys63 bears the N6-lipoyllysine mark.

The protein belongs to the GcvH family. In terms of assembly, the glycine cleavage system is composed of four proteins: P, T, L and H. (R)-lipoate is required as a cofactor.

The glycine cleavage system catalyzes the degradation of glycine. The H protein shuttles the methylamine group of glycine from the P protein to the T protein. This Endomicrobium trichonymphae protein is Glycine cleavage system H protein.